Reading from the N-terminus, the 442-residue chain is Serine--tRNA ligase (442 aa).

244 to 246 (TAE) contributes to the L-serine binding site. ATP is bound at residue 275–277 (RAE). Residue glutamate 298 coordinates L-serine. 365 to 368 (EISS) is an ATP binding site. Serine 400 provides a ligand contact to L-serine.

It belongs to the class-II aminoacyl-tRNA synthetase family. Type-1 seryl-tRNA synthetase subfamily. In terms of assembly, homodimer. The tRNA molecule binds across the dimer.

The protein resides in the cytoplasm. It carries out the reaction tRNA(Ser) + L-serine + ATP = L-seryl-tRNA(Ser) + AMP + diphosphate + H(+). It catalyses the reaction tRNA(Sec) + L-serine + ATP = L-seryl-tRNA(Sec) + AMP + diphosphate + H(+). Its pathway is aminoacyl-tRNA biosynthesis; selenocysteinyl-tRNA(Sec) biosynthesis; L-seryl-tRNA(Sec) from L-serine and tRNA(Sec): step 1/1. Functionally, catalyzes the attachment of serine to tRNA(Ser). Is also able to aminoacylate tRNA(Sec) with serine, to form the misacylated tRNA L-seryl-tRNA(Sec), which will be further converted into selenocysteinyl-tRNA(Sec). This is Serine--tRNA ligase from Bradyrhizobium sp. (strain BTAi1 / ATCC BAA-1182).